A 353-amino-acid polypeptide reads, in one-letter code: Methylthioribose-1-phosphate isomerase (353 aa).

Residues 51–53, Arg-94, and Gln-199 contribute to the substrate site; that span reads RGA. Catalysis depends on Asp-240, which acts as the Proton donor. Substrate is bound at residue 250–251; the sequence is NK.

Belongs to the EIF-2B alpha/beta/delta subunits family. MtnA subfamily. As to quaternary structure, homodimer.

It carries out the reaction 5-(methylsulfanyl)-alpha-D-ribose 1-phosphate = 5-(methylsulfanyl)-D-ribulose 1-phosphate. The protein operates within amino-acid biosynthesis; L-methionine biosynthesis via salvage pathway; L-methionine from S-methyl-5-thio-alpha-D-ribose 1-phosphate: step 1/6. Catalyzes the interconversion of methylthioribose-1-phosphate (MTR-1-P) into methylthioribulose-1-phosphate (MTRu-1-P). The protein is Methylthioribose-1-phosphate isomerase of Bacillus cereus (strain ATCC 14579 / DSM 31 / CCUG 7414 / JCM 2152 / NBRC 15305 / NCIMB 9373 / NCTC 2599 / NRRL B-3711).